We begin with the raw amino-acid sequence, 346 residues long: Actin-like protein 10 (346 aa).

The protein belongs to the actin family.

This Mus musculus (Mouse) protein is Actin-like protein 10 (Actl10).